The primary structure comprises 115 residues: NADH-ubiquinone oxidoreductase chain 3 (115 aa).

A run of 3 helical transmembrane segments spans residues Ala-4–Leu-24, Phe-55–Leu-75, and Leu-84–Tyr-104.

This sequence belongs to the complex I subunit 3 family. Core subunit of respiratory chain NADH dehydrogenase (Complex I) which is composed of 45 different subunits. Interacts with TMEM186. Interacts with TMEM242.

The protein localises to the mitochondrion inner membrane. The catalysed reaction is a ubiquinone + NADH + 5 H(+)(in) = a ubiquinol + NAD(+) + 4 H(+)(out). Core subunit of the mitochondrial membrane respiratory chain NADH dehydrogenase (Complex I) which catalyzes electron transfer from NADH through the respiratory chain, using ubiquinone as an electron acceptor. Essential for the catalytic activity of complex I. The sequence is that of NADH-ubiquinone oxidoreductase chain 3 from Halichoerus grypus (Gray seal).